Here is a 211-residue protein sequence, read N- to C-terminus: MLVLGLTGGIGSGKSIVAEMFRTLGAKVVSADDLARMIVQPGSPTLARIARRFGAEVLCEGGALNRAWLAKKIFSDPQARLDLDRITHPAIAELARRRFAALAQASATLVVYDAPLLFEAGADTQVDAVVVVSVAEEVQLQRLMLRDGLDEQAARSRMDSQMPLDEKLARADYVIDNNGSLEQTRDQVVALMARLVPGMKGPDPHASGSAG.

The DPCK domain maps to 3-206 (VLGLTGGIGS…PGMKGPDPHA (204 aa)). Residue 11 to 16 (GSGKSI) coordinates ATP.

This sequence belongs to the CoaE family.

It localises to the cytoplasm. It catalyses the reaction 3'-dephospho-CoA + ATP = ADP + CoA + H(+). The protein operates within cofactor biosynthesis; coenzyme A biosynthesis; CoA from (R)-pantothenate: step 5/5. Functionally, catalyzes the phosphorylation of the 3'-hydroxyl group of dephosphocoenzyme A to form coenzyme A. The protein is Dephospho-CoA kinase of Syntrophotalea carbinolica (strain DSM 2380 / NBRC 103641 / GraBd1) (Pelobacter carbinolicus).